Here is a 2224-residue protein sequence, read N- to C-terminus: MASTDCYLALEDGTVLPGYSFGYVPSENESKVGFGGEVVFQTGMVGYTEALTDRSYSGQILVLTYPLIGNYGVPAPDEDEHGLPLHFEWMKGVVQATALVVGEVAEEAFHWRKWKTLPDWLKQHKVPGIQDIDTRALTKKLREQGSMLGKIVYEKPPVEGLPKSSFVDPNVRNLAKECSVKERQVYGNPNGKGPRIAILDCGLKLNQLRCLLQRGASVTLLPWSARLEDEQFDALFLSNGPGNPESCDQIVQQVRKVIEEGQKPVFGICLGHQLLAKAIGCSTYKMKYGNRGHNLPCLHRATGRCLMTSQNHGYAVDLEQLPDGWSELFVNANDGTNEGIVHASKPYFSVQFHPEHHAGPQDTEFLFDVFMESIQQKDLTIPQLIEQRLRPTTPAIDSAPVMPRKVLILGSGGLSIGQAGEFDYSGSQAIKAMRESNIQTVLINPNIATVQTSKGMADKCYFLPLTPHYVEQVIKSERPNGVLLTFGGQTALNCGVQLERAGVFSKYNVRILGTPIQSIIETEDRKLFAERVNEIGEQVAPSEAVYSVAQALDAASRLGYPVMARAAFSLGGLGSGFANNEEELQSLAQQALAHSSQLIVDKSLKGWKEVEYEVVRDAYNNCITVCNMENFDPLGIHTGESIVVAPSQTLSDREYQMLRSTALKVIRHFGVVGECNIQYALCPHSEQYYIIEVNARLSRSSALASKATGYPLAYVAAKLALGLPLPDIKNSVTGNTTACFEPSLDYCVVKIPRWDLAKFVRVSKHIGSSMKSVGEVMAIGRNFEEAFQKALRMVDSDVLGFDPDVVPLNKEQLAEQLSEPTDRRPFVIAAALQLGMSLRELHQLTNIDYWFLEKLERIILLQSLLTRNGSRTDAALLLKAKRFGFSDKQIAKYIKSTELAVRHQRQEFGIRPHVKQIDTVAGEWPASTNYLYHTYNGSEHDVDFPGGHTIVVGSGVYRIGSSVEFDWCAVGCLRELRKLQRPTIMINYNPETVSTDYDMCDRLYFEEISFEVVMDIYEMENSEGIILSMGGQLPNNIAMDLHRQQAKVLGTSPESIDCAENRFKFSRMLDRKGILQPRWKELTNLQSAIEFCEEVGYPCLVRPSYVLSGAAMNVAYSNQDLETYLNAASEVSREHPVVISKFLTEAKEIDVDAVASDGRILCMAVSEHVENAGVHSGDATLVTPPQDLNAETLEAIKRITCDLASVLDVTGPFNMQLIAKNNELKVIECNVRVSRSFPFVSKTLDHDFVATATRAIVGLDVEPLDVLHGVGKVGVKVPQFSFSRLAGADVQLGVEMASTGEVACFGDNRYEAYLKAMMSTGFQIPKNAVLLSIGSFKHKMELLPSIRDLAKMGYKLYASMGTGDFYAEHGVNVESVQWTFDKTTPDDINGELRHLAEFLANKQFDLVINLPMSGGGARRVSSFMTHGYRTRRLAVDYSIPLVTDVKCTKLLVESMRMNGGKPPMKTHTDCMTSRRIVKLPGFIDVHVHLREPGATHKEDFASGTAAALAGGVTLVCAMPNTNPSIVDRETFTQFQELAKAGARCDYALYVGASDDNWAQVNELASHACGLKMYLNDTFGTLKLSDMTSWQRHLSHWPKRSPIVCHAERQSTAAVIMLAHLLDRSVHICHVARKEEIQLIRSAKEKGVKVTCEVCPHHLFLSTKDVERLGHGMSEVRPLLCSPEDQEALWENIDYIDVFATDHAPHTLAEKRSERPPPGFPGVETILPLLLQAVHEGRLTMEDIKRKFHRNPKIIFNLPDQAQTYVEVDLDEEWTITGNEMKSKSGWTPFEGTKVKGRVHRVVLRGEVAFVDGQVLVQPGFGQNVRPKQSPLASEASQDLLPSDNDANDTFTRLLTSEGPGGGVHGISTKVHFVDGANFLRPNSPSPRIRLDSASNTTLREYLQRTTNSNPVAHSLMGKHILAVDMFNKDHLNDIFNLAQLLKLRGTKDRPVDELLPGKIMASVFYEVSTRTQCSFAAAMLRLGGRVISMDNITSSVKKGESLEDSIKVVSSYADVVVLRHPSPGAVARAATFSRKPLINAGDGVGEHPTQALLDIFTIREEFGTVNGLTITMVGDLKNGRTVHSLARLLTLYNVNLQYVAPNSLQMPDEVVQFVHQRGVKQLFARDLKNVLPDTDVLYMTRIQRERFDNVEDYEKCCGHLVLTPEHMMRAKKRSIVLHPLPRLNEISREIDSDPRAAYFRQAEYGMYIRMALLAMVVGGRNTAL.

The tract at residues 1-369 is GATase (Glutamine amidotransferase); that stretch reads MASTDCYLAL…PQDTEFLFDV (369 aa). Residues Ser-55, Gly-240, and Gly-242 each coordinate L-glutamine. The Glutamine amidotransferase type-1 domain maps to 195 to 380; that stretch reads RIAILDCGLK…MESIQQKDLT (186 aa). Cys-269 serves as the catalytic Nucleophile; for GATase activity. L-glutamine is bound by residues Leu-270, Gln-273, Asn-311, Gly-313, and Tyr-314. Catalysis depends on for GATase activity residues His-353 and Glu-355. Residues 370–415 are linker; it reads FMESIQQKDLTIPQLIEQRLRPTTPAIDSAPVMPRKVLILGSGGLS. The CPSase (Carbamoyl-phosphate synthase) stretch occupies residues 416 to 1470; the sequence is IGQAGEFDYS…KPPMKTHTDC (1055 aa). Residues Arg-525, Arg-565, Gly-571, Gly-572, Lys-602, Glu-609, Gly-635, Ile-636, His-637, Gln-678, and Glu-692 each contribute to the ATP site. ATP-grasp domains follow at residues 529 to 721 and 1066 to 1257; these read AERV…KLAL and SRML…RAIV. The Mg(2+) site is built by Gln-678, Glu-692, and Asn-694. Positions 678, 692, and 694 each coordinate Mn(2+). Positions 1102, 1141, 1143, 1148, 1173, 1174, 1175, 1176, 1216, and 1228 each coordinate ATP. Mg(2+) contacts are provided by Gln-1216, Glu-1228, and Asn-1230. Mn(2+)-binding residues include Gln-1216, Glu-1228, and Asn-1230. One can recognise an MGS-like domain in the interval 1322–1477; it reads FQIPKNAVLL…TDCMTSRRIV (156 aa). Residues 1471 to 1484 form a linker region; that stretch reads MTSRRIVKLPGFID. Positions 1485 to 1800 are DHOase (dihydroorotase); that stretch reads VHVHLREPGA…GTKVKGRVHR (316 aa). Zn(2+) is bound by residues His-1486 and His-1488. (S)-dihydroorotate contacts are provided by Arg-1490 and Asn-1520. Zn(2+) contacts are provided by Lys-1571, His-1605, Cys-1628, His-1629, and Glu-1652. Lys-1571 is modified (N6-carboxylysine). A (S)-dihydroorotate-binding site is contributed by Arg-1676. Zn(2+) is bound at residue Asp-1701. Asp-1701 functions as the For DHOase activity in the catalytic mechanism. Positions 1705 and 1717 each coordinate (S)-dihydroorotate. A linker region spans residues 1801-1912; sequence VVLRGEVAFV…QRTTNSNPVA (112 aa). The interval 1821 to 1843 is disordered; sequence GQNVRPKQSPLASEASQDLLPSD. Phosphoserine occurs at positions 1883, 1885, 1892, and 1894. An ATCase (Aspartate transcarbamylase) region spans residues 1913–2224; the sequence is HSLMGKHILA…MVVGGRNTAL (312 aa). Residues Arg-1970 and Thr-1971 each coordinate carbamoyl phosphate. Lys-1998 is an L-aspartate binding site. 3 residues coordinate carbamoyl phosphate: Arg-2019, His-2047, and Gln-2050. L-aspartate is bound by residues Arg-2080 and Arg-2141. 2 residues coordinate carbamoyl phosphate: Leu-2180 and Pro-2181.

This sequence in the N-terminal section; belongs to the CarA family. The protein in the 2nd section; belongs to the CarB family. In the 3rd section; belongs to the metallo-dependent hydrolases superfamily. DHOase family. CAD subfamily. It in the C-terminal section; belongs to the aspartate/ornithine carbamoyltransferase superfamily. ATCase family. Mg(2+) serves as cofactor. The cofactor is Mn(2+). It depends on Zn(2+) as a cofactor.

It localises to the cytoplasm. The catalysed reaction is hydrogencarbonate + L-glutamine + 2 ATP + H2O = carbamoyl phosphate + L-glutamate + 2 ADP + phosphate + 2 H(+). It carries out the reaction L-glutamine + H2O = L-glutamate + NH4(+). The enzyme catalyses hydrogencarbonate + NH4(+) + 2 ATP = carbamoyl phosphate + 2 ADP + phosphate + 2 H(+). It catalyses the reaction carbamoyl phosphate + L-aspartate = N-carbamoyl-L-aspartate + phosphate + H(+). The catalysed reaction is (S)-dihydroorotate + H2O = N-carbamoyl-L-aspartate + H(+). Its pathway is pyrimidine metabolism; UMP biosynthesis via de novo pathway; (S)-dihydroorotate from bicarbonate: step 1/3. It functions in the pathway pyrimidine metabolism; UMP biosynthesis via de novo pathway; (S)-dihydroorotate from bicarbonate: step 2/3. It participates in pyrimidine metabolism; UMP biosynthesis via de novo pathway; (S)-dihydroorotate from bicarbonate: step 3/3. In terms of biological role, multifunctional protein that encodes the first 3 enzymatic activities of the de novo pyrimidine pathway: carbamoylphosphate synthetase (CPSase; EC 6.3.5.5), aspartate transcarbamylase (ATCase; EC 2.1.3.2) and dihydroorotase (DHOase; EC 3.5.2.3). The CPSase-function is accomplished in 2 steps, by a glutamine-dependent amidotransferase activity (GATase) that binds and cleaves glutamine to produce ammonia, followed by an ammonium-dependent carbamoyl phosphate synthetase, which reacts with the ammonia, hydrogencarbonate and ATP to form carbamoyl phosphate. The endogenously produced carbamoyl phosphate is sequestered and channeled to the ATCase active site. ATCase then catalyzes the formation of carbamoyl-L-aspartate from L-aspartate and carbamoyl phosphate. In the last step, DHOase catalyzes the cyclization of carbamoyl aspartate to dihydroorotate. The protein is Multifunctional protein r (r) of Drosophila melanogaster (Fruit fly).